The sequence spans 261 residues: Acetylglutamate kinase (261 aa).

Substrate contacts are provided by residues 46 to 47 (GG), Arg68, and Asn160.

This sequence belongs to the acetylglutamate kinase family. ArgB subfamily.

It localises to the cytoplasm. The catalysed reaction is N-acetyl-L-glutamate + ATP = N-acetyl-L-glutamyl 5-phosphate + ADP. Its pathway is amino-acid biosynthesis; L-arginine biosynthesis; N(2)-acetyl-L-ornithine from L-glutamate: step 2/4. In terms of biological role, catalyzes the ATP-dependent phosphorylation of N-acetyl-L-glutamate. This Shewanella loihica (strain ATCC BAA-1088 / PV-4) protein is Acetylglutamate kinase.